Here is an 816-residue protein sequence, read N- to C-terminus: Microbial collagenase (816 aa).

The signal sequence occupies residues methionine 1–alanine 27. Position 435 (histidine 435) interacts with Zn(2+). Glutamate 436 is a catalytic residue. Histidine 439 is a Zn(2+) binding site.

Belongs to the peptidase M9A family. Zn(2+) serves as cofactor.

The protein localises to the secreted. It catalyses the reaction Digestion of native collagen in the triple helical region at Xaa-|-Gly bonds. With synthetic peptides, a preference is shown for Gly at P3 and P1', Pro and Ala at P2 and P2', and hydroxyproline, Ala or Arg at P3'.. In terms of biological role, possesses gelatinolytic activity. Can cause weak haemolysis on blood agar. This chain is Microbial collagenase (prt), found in Vibrio parahaemolyticus serotype O3:K6 (strain RIMD 2210633).